Reading from the N-terminus, the 464-residue chain is Protein FAM90A7 (464 aa).

3 disordered regions span residues methionine 1 to leucine 42, valine 69 to aspartate 387, and alanine 410 to proline 437. 2 stretches are compositionally biased toward basic and acidic residues: residues glycine 74–alanine 89 and asparagine 97–aspartate 111. Low complexity predominate over residues leucine 180–leucine 197.

This sequence belongs to the FAM90 family.

The sequence is that of Protein FAM90A7 from Homo sapiens (Human).